The sequence spans 163 residues: COP9 signalosome complex subunit 9 (163 aa).

The PCI domain maps to 5 to 120 (EVLHAVLDPK…SVGRRIKVLR (116 aa)).

Component of a COP9 signalosome-like (CSN) complex.

It is found in the cytoplasm. It localises to the nucleus. Component of the COP9 signalosome (CSN) complex that acts as a regulator of the ubiquitin (Ubl) conjugation pathway by mediating the deneddylation of the cullin subunit of SCF-type E3 ubiquitin-protein ligase complexes. The complex is involved in the regulation of the mating pheromone response. This is COP9 signalosome complex subunit 9 (CSN9) from Eremothecium gossypii (strain ATCC 10895 / CBS 109.51 / FGSC 9923 / NRRL Y-1056) (Yeast).